Here is a 249-residue protein sequence, read N- to C-terminus: Zinc finger protein mnm-2 (249 aa).

The interval 20-65 (PKEELETEEEDEEEDEEEELSSSEVTSENDMETESASSSASSVGQP) is disordered. Residues 24-52 (LETEEEDEEEDEEEELSSSEVTSENDMET) are compositionally biased toward acidic residues. 3 consecutive C2H2-type zinc fingers follow at residues 168–190 (YRCD…KRIH), 196–218 (FKCE…RLTH), and 224–246 (YVCG…MRTH).

In larva and adult, expressed in the M3 pharyngeal motor neurons, extrapharyngeal neurons in the head, the PQR tail neurons, rectal cells, vulva cells, the spermetheca-uterine valve, body wall muscle cells and neurons of the ventral nerve cord. In the embryo, expressed in pharyngeal cells, extrapharyngeal head neurons and within the tail. Expressed in body wall muscle cells during late embryonic stages. Expressed in the mother cells of the M2 and M3 pharyngeal motor neurons precursor cells at the embryonic bean stage and subsequently in the M2 and M3 cells as they are born. Expression is sustained only in the two M3 cells up to at least the 5-day-old adult. In contrast, expression gradually declines in the M2 cells beginning from the time of their birth, and is completely undetectable by the time of hatching.

The protein localises to the nucleus. Its function is as follows. Required in the M3 pharyngeal motor neuron to guide the growth cone of the sister M2 motor neuron during axon development. In Caenorhabditis elegans, this protein is Zinc finger protein mnm-2.